The sequence spans 360 residues: Phospho-N-acetylmuramoyl-pentapeptide-transferase (360 aa).

Over 1 to 25 (MLVWLAEHLVKYYSGFNVFSYLTFR) the chain is Periplasmic. A helical membrane pass occupies residues 26-46 (AIVSLLTALFISLWMGPRMIA). The Cytoplasmic segment spans residues 47 to 71 (HLQKLSFGQVVRNDGPESHFSKRGT). A helical transmembrane segment spans residues 72-92 (PTMGGIMILTAIVISVLLWAY). Residue proline 93 is a topological domain, periplasmic. Residues 94–114 (SNPYVWCVLVVLVGYGVIGFV) traverse the membrane as a helical segment. At 115-131 (DDYRKVVRKDTKGLIAR) the chain is on the cytoplasmic side. Residues 132 to 152 (WKYFWMSVIALGVAFALYLVG) traverse the membrane as a helical segment. The Periplasmic segment spans residues 153–167 (KDTPATQLVVPFFKD). Residues 168–188 (VMPQLGLFYILLAYFVIVGTG) form a helical membrane-spanning segment. The Cytoplasmic segment spans residues 189–198 (NAVNLTDGLD). The helical transmembrane segment at 199 to 219 (GLAIMPTVFVAGGFALVAWAT) threads the bilayer. The Periplasmic portion of the chain corresponds to 220–235 (GNMNFASYLHIPYLRH). The chain crosses the membrane as a helical span at residues 236 to 256 (AGELVIVCTAIVGAGLGFLWF). At 257-262 (NTYPAQ) the chain is on the cytoplasmic side. The chain crosses the membrane as a helical span at residues 263–283 (VFMGDVGSLALGGALGIIAVL). At 284–287 (LRQE) the chain is on the periplasmic side. A helical membrane pass occupies residues 288–308 (FLLVIMGGVFVVETLSVILQV). Over 309–337 (GSFKLRGQRIFRMAPIHHHYELKGWPEPR) the chain is Cytoplasmic. A helical transmembrane segment spans residues 338-358 (VIVRFWIISLMLVLIGLATLK). Topologically, residues 359–360 (VR) are periplasmic.

The protein belongs to the glycosyltransferase 4 family. MraY subfamily. Mg(2+) is required as a cofactor.

The protein resides in the cell inner membrane. It carries out the reaction UDP-N-acetyl-alpha-D-muramoyl-L-alanyl-gamma-D-glutamyl-meso-2,6-diaminopimeloyl-D-alanyl-D-alanine + di-trans,octa-cis-undecaprenyl phosphate = di-trans,octa-cis-undecaprenyl diphospho-N-acetyl-alpha-D-muramoyl-L-alanyl-D-glutamyl-meso-2,6-diaminopimeloyl-D-alanyl-D-alanine + UMP. It participates in cell wall biogenesis; peptidoglycan biosynthesis. In terms of biological role, catalyzes the initial step of the lipid cycle reactions in the biosynthesis of the cell wall peptidoglycan: transfers peptidoglycan precursor phospho-MurNAc-pentapeptide from UDP-MurNAc-pentapeptide onto the lipid carrier undecaprenyl phosphate, yielding undecaprenyl-pyrophosphoryl-MurNAc-pentapeptide, known as lipid I. This chain is Phospho-N-acetylmuramoyl-pentapeptide-transferase, found in Escherichia coli O157:H7.